Consider the following 172-residue polypeptide: Agamous-like MADS-box protein AGL29 (172 aa).

An MADS-box domain is found at 1–61 (MGRRKIKMEM…GKPFSYGKPN (61 aa)). The stretch at 86 to 123 (NYRPKLKRLSERLDLLNQEVEAEKERGEKSQEKLESAG) forms a coiled coil. A disordered region spans residues 106-125 (EAEKERGEKSQEKLESAGDE).

Expressed in pollen.

The protein localises to the nucleus. Probable transcription factor. The sequence is that of Agamous-like MADS-box protein AGL29 from Arabidopsis thaliana (Mouse-ear cress).